Reading from the N-terminus, the 380-residue chain is Chaperone protein DnaJ (380 aa).

The tract at residues 1–48 (MAKKDYYDTLGVPKNASDDDIKKAYRKLAMKHHPDRNQGDKSKVSEEK) is disordered. A J domain is found at 5–72 (DYYDTLGVPK…NKRMAYDQYG (68 aa)). The span at 24–34 (AYRKLAMKHHP) shows a compositional bias: basic residues. Over residues 35 to 48 (DRNQGDKSKVSEEK) the composition is skewed to basic and acidic residues. The CR-type zinc finger occupies 139–217 (GKEAQIRIPS…CHGVGKTKNN (79 aa)). Zn(2+) is bound by residues Cys-152, Cys-155, Cys-169, Cys-172, Cys-191, Cys-194, Cys-205, and Cys-208. CXXCXGXG motif repeat units lie at residues 152–159 (CNTCHGSG), 169–176 (CTTCHGHG), 191–198 (CPQCKGTG), and 205–212 (CVACHGVG). A disordered region spans residues 357-380 (KKGGARHSPSEEGWADKLKSFFSA). Residues 364 to 380 (SPSEEGWADKLKSFFSA) show a composition bias toward basic and acidic residues.

The protein belongs to the DnaJ family. As to quaternary structure, homodimer. It depends on Zn(2+) as a cofactor.

It is found in the cytoplasm. In terms of biological role, participates actively in the response to hyperosmotic and heat shock by preventing the aggregation of stress-denatured proteins and by disaggregating proteins, also in an autonomous, DnaK-independent fashion. Unfolded proteins bind initially to DnaJ; upon interaction with the DnaJ-bound protein, DnaK hydrolyzes its bound ATP, resulting in the formation of a stable complex. GrpE releases ADP from DnaK; ATP binding to DnaK triggers the release of the substrate protein, thus completing the reaction cycle. Several rounds of ATP-dependent interactions between DnaJ, DnaK and GrpE are required for fully efficient folding. Also involved, together with DnaK and GrpE, in the DNA replication of plasmids through activation of initiation proteins. This is Chaperone protein DnaJ from Polaromonas sp. (strain JS666 / ATCC BAA-500).